A 223-amino-acid chain; its full sequence is Putative lipoprotein NMB1126/NMB1164 (223 aa).

The first 19 residues, 1-19 (MKTVSTAVVLAAAAVSLTG), serve as a signal peptide directing secretion. Cysteine 20 carries N-palmitoyl cysteine lipidation. Cysteine 20 is lipidated: S-diacylglycerol cysteine.

Its subcellular location is the cell membrane. The chain is Putative lipoprotein NMB1126/NMB1164 from Neisseria meningitidis serogroup B (strain ATCC BAA-335 / MC58).